A 226-amino-acid polypeptide reads, in one-letter code: Ribonuclease 3 (226 aa).

Residues 7–129 enclose the RNase III domain; the sequence is LARLSRTLGY…IIGAVYLDAN (123 aa). Glu42 serves as a coordination point for Mg(2+). Asp46 is a catalytic residue. Mg(2+)-binding residues include Asp115 and Glu118. Residue Glu118 is part of the active site. The 71-residue stretch at 156 to 226 folds into the DRBM domain; sequence DPKTILQEYL…AAQILELINK (71 aa).

It belongs to the ribonuclease III family. Homodimer. Requires Mg(2+) as cofactor.

It localises to the cytoplasm. The enzyme catalyses Endonucleolytic cleavage to 5'-phosphomonoester.. In terms of biological role, digests double-stranded RNA. Involved in the processing of primary rRNA transcript to yield the immediate precursors to the large and small rRNAs (23S and 16S). Processes some mRNAs, and tRNAs when they are encoded in the rRNA operon. Processes pre-crRNA and tracrRNA of type II CRISPR loci if present in the organism. The protein is Ribonuclease 3 of Shewanella denitrificans (strain OS217 / ATCC BAA-1090 / DSM 15013).